A 689-amino-acid polypeptide reads, in one-letter code: Glycine--tRNA ligase beta subunit (689 aa).

It belongs to the class-II aminoacyl-tRNA synthetase family. In terms of assembly, tetramer of two alpha and two beta subunits.

The protein resides in the cytoplasm. The catalysed reaction is tRNA(Gly) + glycine + ATP = glycyl-tRNA(Gly) + AMP + diphosphate. The sequence is that of Glycine--tRNA ligase beta subunit from Klebsiella pneumoniae subsp. pneumoniae (strain ATCC 700721 / MGH 78578).